A 90-amino-acid polypeptide reads, in one-letter code: Small ribosomal subunit protein bS18 (90 aa).

The protein belongs to the bacterial ribosomal protein bS18 family. As to quaternary structure, part of the 30S ribosomal subunit. Forms a tight heterodimer with protein bS6.

Binds as a heterodimer with protein bS6 to the central domain of the 16S rRNA, where it helps stabilize the platform of the 30S subunit. This chain is Small ribosomal subunit protein bS18, found in Bacteroides fragilis (strain YCH46).